A 103-amino-acid polypeptide reads, in one-letter code: Cyclotide vibi-K (103 aa).

Positions A1–A9 are cleaved as a signal peptide. Residues S10–N69 constitute a propeptide that is removed on maturation. A cross-link (cyclopeptide (Gly-Asn)) is located at residues G70–N99. Disulfide bonds link C73–C89, C77–C91, and C82–C96. The propeptide occupies S100–N103.

This is a cyclic peptide.

Functionally, probably participates in a plant defense mechanism. This chain is Cyclotide vibi-K, found in Viola biflora (Yellow wood violet).